Reading from the N-terminus, the 285-residue chain is Acetyl-coenzyme A carboxylase carboxyl transferase subunit beta (285 aa).

One can recognise a CoA carboxyltransferase N-terminal domain in the interval 24–285 (GLWYKSPTGK…DLIQNQPVRA (262 aa)).

The protein belongs to the AccD/PCCB family. In terms of assembly, acetyl-CoA carboxylase is a heterohexamer composed of biotin carboxyl carrier protein (AccB), biotin carboxylase (AccC) and two subunits each of ACCase subunit alpha (AccA) and ACCase subunit beta (AccD).

Its subcellular location is the cytoplasm. It carries out the reaction N(6)-carboxybiotinyl-L-lysyl-[protein] + acetyl-CoA = N(6)-biotinyl-L-lysyl-[protein] + malonyl-CoA. It functions in the pathway lipid metabolism; malonyl-CoA biosynthesis; malonyl-CoA from acetyl-CoA: step 1/1. Functionally, component of the acetyl coenzyme A carboxylase (ACC) complex. Biotin carboxylase (BC) catalyzes the carboxylation of biotin on its carrier protein (BCCP) and then the CO(2) group is transferred by the transcarboxylase to acetyl-CoA to form malonyl-CoA. This Christiangramia forsetii (strain DSM 17595 / CGMCC 1.15422 / KT0803) (Gramella forsetii) protein is Acetyl-coenzyme A carboxylase carboxyl transferase subunit beta.